Consider the following 28-residue polypeptide: Conotoxin Cl9b (28 aa).

2 positions are modified to 4-hydroxyproline: Pro17 and Pro28.

Post-translationally, contains 3 disulfide bonds. In terms of tissue distribution, expressed by the venom duct.

Its subcellular location is the secreted. The protein is Conotoxin Cl9b of Californiconus californicus (California cone).